Here is a 558-residue protein sequence, read N- to C-terminus: Membrane protein insertase YidC (558 aa).

A run of 6 helical transmembrane segments spans residues 6-26, 326-348, 355-377, 424-444, 469-489, and 512-532; these read VIAA…FFQP, LAID…DYFF, GLAI…NFSF, LPIL…FVTI, VFGL…WPII, and IFMF…AGLV.

This sequence belongs to the OXA1/ALB3/YidC family. Type 1 subfamily. Interacts with the Sec translocase complex via SecD. Specifically interacts with transmembrane segments of nascent integral membrane proteins during membrane integration.

The protein resides in the cell inner membrane. Its function is as follows. Required for the insertion and/or proper folding and/or complex formation of integral membrane proteins into the membrane. Involved in integration of membrane proteins that insert both dependently and independently of the Sec translocase complex, as well as at least some lipoproteins. Aids folding of multispanning membrane proteins. The polypeptide is Membrane protein insertase YidC (Pelagibacter ubique (strain HTCC1062)).